The chain runs to 209 residues: Large ribosomal subunit protein uL3 (209 aa).

The interval 129-153 (SRGPMSHGSKFHRAPGSMGAASDPS) is disordered.

Belongs to the universal ribosomal protein uL3 family. Part of the 50S ribosomal subunit. Forms a cluster with proteins L14 and L19.

In terms of biological role, one of the primary rRNA binding proteins, it binds directly near the 3'-end of the 23S rRNA, where it nucleates assembly of the 50S subunit. This Clostridium perfringens (strain 13 / Type A) protein is Large ribosomal subunit protein uL3.